A 245-amino-acid chain; its full sequence is tRNA (guanine-N(1)-)-methyltransferase (245 aa).

Residues Gly-111 and 131–136 each bind S-adenosyl-L-methionine; that span reads MGDYVL.

It belongs to the RNA methyltransferase TrmD family. In terms of assembly, homodimer.

The protein resides in the cytoplasm. It catalyses the reaction guanosine(37) in tRNA + S-adenosyl-L-methionine = N(1)-methylguanosine(37) in tRNA + S-adenosyl-L-homocysteine + H(+). Its function is as follows. Specifically methylates guanosine-37 in various tRNAs. The polypeptide is tRNA (guanine-N(1)-)-methyltransferase (Staphylococcus aureus (strain Mu3 / ATCC 700698)).